The primary structure comprises 680 residues: MLTHKTCQARKKMQVSFVIRDAEEKQHRNGVNALQLDANNGKLYSAGRDAIIRVWNTRTDSSEKYIQSMEHHNDWVNDIVLCCNGRNLISASCDTTVKVWNAQKGFCMSTLRTHRDYVQALAYAKDREQVASAGLDKAIFLWDVNTLTALTASNNTVTTSSLTGSKDSIYSLAMNPSGTVIVSGSTENILRIWDPRTCMRIMKLRGHTENVRCLVVSPDGNQVVSGSSDGTIKVWNLGQQRCVQTIHVHKEGVWSLLMSENFQYIISGSRDRNIIVTEMRNPSNKTLVCEEQAPVLSLGYNIDKTGVWATTWNSDIRCWKLPMYDRCTLNSSGGMDAQWTQGGTEVACIKGGAAIKECAVLNDKRYIITKDSQDQVVVYDVLRVVKKEQLGAVDYEAEVKKRNKQVYIPNWFTVDLKTGMPTIVLGQEEVDCFSAWVSIEAGLPECVDPTTEIKINYGKLLLEALLEYWTPPHSIPPNEMEPDMHGNGYFQVPKHTPVIFSEVGGRTVCRLLVRDAAGDSESTLLHETAPQWVTDVVIEKNIPKFLKIPFFLQPHPQMTKPERTKKDRLVANEFIQCRKVCEHVLEKVLNAETTPSGGNANNSLQNSQSDANSEGSQLPAEERIELWCNDVVVDPNMDLRTVRHFIWKQSTDLTFQYKTKQNFNYDGSIGDSLERVTRKY.

WD repeat units lie at residues 26–65 (QHRNGVNALQLDANNGKLYSAGRDAIIRVWNTRTDSSEKY), 71–110 (HHNDWVNDIVLCCNGRNLISASCDTTVKVWNAQKGFCMST), 113–152 (THRDYVQALAYAKDREQVASAGLDKAIFLWDVNTLTALTA), 164–203 (GSKDSIYSLAMNPSGTVIVSGSTENILRIWDPRTCMRIMK), 206–245 (GHTENVRCLVVSPDGNQVVSGSSDGTIKVWNLGQQRCVQT), 248–287 (VHKEGVWSLLMSENFQYIISGSRDRNIIVTEMRNPSNKTL), 290–329 (EEQAPVLSLGYNIDKTGVWATTWNSDIRCWKLPMYDRCTL), and 350–389 (KGGAAIKECAVLNDKRYIITKDSQDQVVVYDVLRVVKKEQ). Positions 592 to 616 (ETTPSGGNANNSLQNSQSDANSEGS) are disordered.

It belongs to the WD repeat WDR48 family. Catalytic component of the Usp12-46 deubiquitylase complex consisting of Usp12-46, Wdr20 and Uaf1; regulatory subunit that, together wtih Wdr20, stabilizes Usp12-46. The Usp12-46 deubiquitylase complex associates with arr/arrow; the interaction leads to deubiquitination and stabilization of arr/arrow.

Regulatory component of the Usp12-46 deubiquitylase complex. activates deubiquitination by increasing the catalytic turnover without increasing the affinity of deubiquitinating enzymes for the substrate. The complex deubiquitylates the wg/wingless-signaling receptor arr/arrow, which stabilizes the receptor and increases its concentration at the cell surface; this enhances the sensitivity of cells to wg/wingless-signal stimulation. This increases the amplitude and spatial range of the signaling response to the wg/wingless morphogen gradient, facilitating the precise concentration-dependent regulation of its target genes. Together with Wdr20 and Usp12-46 required for wg/wingless-mediated signaling in the wing imaginal disc and for wg/wingless-dependent regulation of intestinal stem cell proliferation. The polypeptide is WD repeat-containing protein 48 homolog (Drosophila sechellia (Fruit fly)).